Reading from the N-terminus, the 116-residue chain is Large ribosomal subunit protein bL17 (116 aa).

Belongs to the bacterial ribosomal protein bL17 family. As to quaternary structure, part of the 50S ribosomal subunit. Contacts protein L32.

In Dictyoglomus thermophilum (strain ATCC 35947 / DSM 3960 / H-6-12), this protein is Large ribosomal subunit protein bL17.